Consider the following 313-residue polypeptide: Porphobilinogen deaminase (313 aa).

C242 carries the S-(dipyrrolylmethanemethyl)cysteine modification.

This sequence belongs to the HMBS family. Monomer. Requires dipyrromethane as cofactor.

The enzyme catalyses 4 porphobilinogen + H2O = hydroxymethylbilane + 4 NH4(+). It functions in the pathway porphyrin-containing compound metabolism; protoporphyrin-IX biosynthesis; coproporphyrinogen-III from 5-aminolevulinate: step 2/4. In terms of biological role, tetrapolymerization of the monopyrrole PBG into the hydroxymethylbilane pre-uroporphyrinogen in several discrete steps. The chain is Porphobilinogen deaminase from Escherichia coli (strain K12 / MC4100 / BW2952).